The primary structure comprises 892 residues: Ice-binding protein 1 (892 aa).

Positions 1-23 (MNHSIKKTYLVFTMLLGFILLAG) are cleaved as a signal peptide. C24 carries the N-palmitoyl cysteine lipid modification. C24 is lipidated: S-diacylglycerol cysteine. BIG2 domains follow at residues 43–111 (TSIA…ITAS), 134–205 (TALA…SLGS), 221–288 (SIAL…ITAD), 306–386 (TSIM…TVTV), 392–471 (TSIA…TNLT), 478–558 (NSIV…NLTV), and 565–638 (SIDV…QASL). The Ice-binding site motif (T-A/G-X-T/N) signature appears at 866–869 (TGAN).

It belongs to the ice-binding protein family.

The protein resides in the cell outer membrane. Functionally, ice-binding adhesion protein that adsorbs this bacterium onto ice to maintain a favorable position in its aquatic habitat. Inhibits growth of the ice crystals. Has high thermal hysteresis (TH) activity, which is the ability to lower the freezing point of an aqueous solution below its melting point. The TH activity of this protein is approximately 1.4 degrees Celsius at 25 uM and little below 2 degrees Celsius at 80 uM. The sequence is that of Ice-binding protein 1 from Shewanella frigidimarina (strain NCIMB 400).